The primary structure comprises 259 residues: Ribosomal RNA small subunit methyltransferase A (259 aa).

N13, L15, G39, E60, D84, and N101 together coordinate S-adenosyl-L-methionine.

Belongs to the class I-like SAM-binding methyltransferase superfamily. rRNA adenine N(6)-methyltransferase family. RsmA subfamily.

The protein localises to the cytoplasm. It carries out the reaction adenosine(1518)/adenosine(1519) in 16S rRNA + 4 S-adenosyl-L-methionine = N(6)-dimethyladenosine(1518)/N(6)-dimethyladenosine(1519) in 16S rRNA + 4 S-adenosyl-L-homocysteine + 4 H(+). Its function is as follows. Specifically dimethylates two adjacent adenosines (A1518 and A1519) in the loop of a conserved hairpin near the 3'-end of 16S rRNA in the 30S particle. May play a critical role in biogenesis of 30S subunits. The chain is Ribosomal RNA small subunit methyltransferase A from Mesomycoplasma hyopneumoniae (strain J / ATCC 25934 / NCTC 10110) (Mycoplasma hyopneumoniae).